A 578-amino-acid polypeptide reads, in one-letter code: Serine/threonine-protein kinase D6PKL3 (578 aa).

The segment covering 1–24 (MDSSSSVVYVGSSSKSRNFQSKSK) has biased composition (low complexity). The disordered stretch occupies residues 1–64 (MDSSSSVVYV…EVIESSVSSV (64 aa)). Residues 25–34 (GSITSFSIDS) show a composition bias toward polar residues. Residues 53–64 (SPEVIESSVSSV) are compositionally biased toward low complexity. Positions 182–516 (FKLIKKLGGG…ATEIKQHPFF (335 aa)) constitute a Protein kinase domain. ATP contacts are provided by residues 188-196 (LGGGDIGNV) and Lys211. Asp307 serves as the catalytic Proton acceptor. Residues 325-426 (DFDLSLRCAV…VGTHEYLAPE (102 aa)) form an activation loop region. The short motif at 575-578 (IDFF) is the PIF element.

The protein belongs to the protein kinase superfamily. AGC Ser/Thr protein kinase family. In terms of tissue distribution, expressed predominantly in root tissue with lower levels found in leaf, stem, seed and flower.

The protein localises to the cell membrane. The catalysed reaction is L-seryl-[protein] + ATP = O-phospho-L-seryl-[protein] + ADP + H(+). The enzyme catalyses L-threonyl-[protein] + ATP = O-phospho-L-threonyl-[protein] + ADP + H(+). Its function is as follows. Protein kinase that regulates the auxin transport activity of PIN auxin efflux facilitators by direct phosphorylation. D6PK-mediated PIN phosphorylation promotes auxin transport in the hypocotyl and this is a prerequisite for PHOT1-dependent hypocotyl bending. The protein is Serine/threonine-protein kinase D6PKL3 (D6PKL3) of Arabidopsis thaliana (Mouse-ear cress).